The primary structure comprises 237 residues: Uridylate kinase (237 aa).

Position 12–15 (12–15 (KISG)) interacts with ATP. A UMP-binding site is contributed by G54. G55 and R59 together coordinate ATP. UMP-binding positions include D72 and 133 to 140 (TGNPFFST). ATP is bound by residues Y166 and D169.

The protein belongs to the UMP kinase family. Homohexamer.

The protein localises to the cytoplasm. It carries out the reaction UMP + ATP = UDP + ADP. It participates in pyrimidine metabolism; CTP biosynthesis via de novo pathway; UDP from UMP (UMPK route): step 1/1. Inhibited by UTP. Functionally, catalyzes the reversible phosphorylation of UMP to UDP. The protein is Uridylate kinase of Caldanaerobacter subterraneus subsp. tengcongensis (strain DSM 15242 / JCM 11007 / NBRC 100824 / MB4) (Thermoanaerobacter tengcongensis).